The sequence spans 953 residues: MGLKDYYTWTFPNIPEHVAQELDQLGRSLVVVGVIGRSRCVLANKMRAFGMEPPVDHEPTDGQLQCYYKPGSSTLLLHFETTFDDAILGQQIDETMEQDGAPFDFDGFYERMKCRFVRMMLLALHVCHILVYVETGQTFDLSLVTIFQLMKFAREQHLMQFLPSLLKETPAGRLLGEKCRLCTPRILFLFENFTHEEGKTRECVSACEFQTEDSIYELLRHHQIITNSSSSSLLALPNNKQFVFYNAHDQLHADRLLQSIEFLNLDMRKLDVKEEEDDLEVLELAPFDGFVKSFGESFESTNYEEQQYKTEHTAWHFLQRHVQDALLGCFDEGSFKQVPQRGQLQLLNAQEWHDCIAELHKLLVSSAGTQESLNEIRNEDYQVFLQSFDESLNYEKKFWAHLCEIGLKMGIEAYKKAAPAIYGSSMHQQLLAEATLAFEEEGRGPPAEASIAKMTATCLRHWQDGRQQCEQLSLRSQPCTQPKEMPHDKHNSGVIHVSSCNCGRTQGRREDPFSLRQANYEFYEHMVKMCNLCVKVKQFKFPIFEPTNNEYRAAAFEVAFPLLHAGKNRLAQDAELDPDEEDEELPTGEREEQHITQSNGCSQPLSPTFGSDLNMSIAGFGVSLNESEPCFDQSSSSEAESTCSGTSSEESNNELVLQLKEPAKKHEESCDPDSIAPLPSMCLTSTTEYLPGLVHTLSKVGLLPLFPSWSLACVGPSSIYSHNTGLQEHFQSGFLSGANFLLPWDVQLRLVHASKHYHNSHQPHMSKKQQRYRKHGDRMVLKIFVGFEYECSRGHRFMMCRPDRVLRGGADIERDTCSKMVHTNMPLYYPCPCRSQNNYLAQLMRIHVVTPKAPVNIIVDPKVCMGKDKYTFTLGSMVPPRLSQSAYWILRLPYVYQGDDALIAPPEKLEPDDIMAGGYLLAGMFGIAETDPTLDLNDQGHLDTNELGTFTRI.

Disordered regions lie at residues 571–604 (AQDA…CSQP) and 629–653 (PCFD…ESNN). A compositionally biased stretch (acidic residues) spans 574-586 (AELDPDEEDEELP). The span at 595–604 (ITQSNGCSQP) shows a compositional bias: polar residues. A compositionally biased stretch (low complexity) spans 634–653 (SSSSEAESTCSGTSSEESNN).

It belongs to the SMG8 family.

Its function is as follows. Involved in nonsense-mediated decay (NMD) of mRNAs containing premature stop codons. Probable component of kinase complex containing nonC and recruited to stalled ribosomes. The sequence is that of Nonsense-mediated mRNA decay factor SMG8 from Drosophila persimilis (Fruit fly).